The sequence spans 343 residues: Probable dual-specificity RNA methyltransferase RlmN (343 aa).

Glu-91 acts as the Proton acceptor in catalysis. Residues 97–326 enclose the Radical SAM core domain; sequence HPDRITACIS…AEIRREKGSD (230 aa). Cys-104 and Cys-331 form a disulfide bridge. [4Fe-4S] cluster-binding residues include Cys-111, Cys-115, and Cys-118. S-adenosyl-L-methionine contacts are provided by residues 158 to 159, Ser-190, 213 to 215, and Asn-289; these read GE and SLH. The active-site S-methylcysteine intermediate is Cys-331.

Belongs to the radical SAM superfamily. RlmN family. [4Fe-4S] cluster is required as a cofactor.

It is found in the cytoplasm. It catalyses the reaction adenosine(2503) in 23S rRNA + 2 reduced [2Fe-2S]-[ferredoxin] + 2 S-adenosyl-L-methionine = 2-methyladenosine(2503) in 23S rRNA + 5'-deoxyadenosine + L-methionine + 2 oxidized [2Fe-2S]-[ferredoxin] + S-adenosyl-L-homocysteine. It carries out the reaction adenosine(37) in tRNA + 2 reduced [2Fe-2S]-[ferredoxin] + 2 S-adenosyl-L-methionine = 2-methyladenosine(37) in tRNA + 5'-deoxyadenosine + L-methionine + 2 oxidized [2Fe-2S]-[ferredoxin] + S-adenosyl-L-homocysteine. Specifically methylates position 2 of adenine 2503 in 23S rRNA and position 2 of adenine 37 in tRNAs. The chain is Probable dual-specificity RNA methyltransferase RlmN from Thermotoga sp. (strain RQ2).